We begin with the raw amino-acid sequence, 72 residues long: Translation initiation factor IF-1 (72 aa).

Positions 1–72 (MAKEEQIELE…TKGRITFRMK (72 aa)) constitute an S1-like domain.

Belongs to the IF-1 family. In terms of assembly, component of the 30S ribosomal translation pre-initiation complex which assembles on the 30S ribosome in the order IF-2 and IF-3, IF-1 and N-formylmethionyl-tRNA(fMet); mRNA recruitment can occur at any time during PIC assembly.

The protein resides in the cytoplasm. Functionally, one of the essential components for the initiation of protein synthesis. Stabilizes the binding of IF-2 and IF-3 on the 30S subunit to which N-formylmethionyl-tRNA(fMet) subsequently binds. Helps modulate mRNA selection, yielding the 30S pre-initiation complex (PIC). Upon addition of the 50S ribosomal subunit IF-1, IF-2 and IF-3 are released leaving the mature 70S translation initiation complex. The polypeptide is Translation initiation factor IF-1 (Alcanivorax borkumensis (strain ATCC 700651 / DSM 11573 / NCIMB 13689 / SK2)).